The following is a 514-amino-acid chain: Endogenous retrovirus group PABLB member 1 Env polyprotein (514 aa).

A glycan (N-linked (GlcNAc...) asparagine) is linked at Asn58. Residues 60–316 (STSNVFLQWA…YPYLPHVVNQ (257 aa)) form a surface protein region. Positions 82–85 (CWVC) match the CXXC motif. Asn133, Asn140, Asn155, Asn218, Asn226, and Asn267 each carry an N-linked (GlcNAc...) asparagine glycan. A transmembrane protein region spans residues 317-514 (GTRAIVHRND…QRDIFHSNAP (198 aa)). Residues 328–348 (LPTIFMPSVGLGTVIQHIEAL) are fusion peptide. Asn350 and Asn357 each carry an N-linked (GlcNAc...) asparagine glycan. A CKS-17 motif is present at residues 378–394 (LQNRMALDILTAAEGGT). Residues Cys395 and Cys402 are joined by a disulfide bond. The CX6CC motif lies at 395 to 403 (CALIKTECC). 2 N-linked (GlcNAc...) asparagine glycosylation sites follow: Asn408 and Asn412. Residues 452 to 472 (ILIVLATLWSVGIALCCGLYF) traverse the membrane as a helical segment.

This sequence belongs to the gamma type-C retroviral envelope protein family. HERV class-I R(b) env subfamily. In terms of processing, the CXXC motif is highly conserved across a broad range of retroviral envelope proteins. It is thought to participate in the formation of a labile disulfide bond possibly with the CX6CC motif present in the transmembrane domain. Low expression in placenta and testis.

The protein resides in the cell membrane. Its function is as follows. Retroviral envelope proteins mediate receptor recognition and membrane fusion during early infection. Endogenous envelope proteins may have kept, lost or modified their original function during evolution. This endogenous envelope protein has lost its original fusogenic properties. The protein is Endogenous retrovirus group PABLB member 1 Env polyprotein (ERVPABLB-1) of Homo sapiens (Human).